Reading from the N-terminus, the 399-residue chain is Peroxisome assembly protein 12 (399 aa).

Residues 1 to 24 (MSFYSNLPSAGQSSRGSSTSGRNG) form a disordered region. Residues 1–33 (MSFYSNLPSAGQSSRGSSTSGRNGVGLEPLYPT) are Peroxisomal matrix-facing. Low complexity predominate over residues 9 to 24 (SAGQSSRGSSTSGRNG). Residues 34-62 (IFEIMSSQEIDSLLPASIRYLLANHLVAN) form a helical membrane-spanning segment. Residues 63–67 (FPNRY) lie on the Cytoplasmic side of the membrane. The chain crosses the membrane as a helical span at residues 68-92 (TLRLNKYFFEWFQAIKGFVEWYHLK). At 93–136 (TYNSTFIDRFYGLQLFSSRDRNLALTQCLNPKGQSEWPQGLQLN) the chain is on the peroxisomal matrix side. Residues 137–168 (QQQKSVIFLEKIILPYITAKLDEILEKISMNN) traverse the membrane as a helical segment. Over 169-171 (IFS) the chain is Cytoplasmic. The chain crosses the membrane as a helical span at residues 172–208 (SDETENKWPKRAFLRIYPFIKKLLALSNLLVKLLFLT). Topologically, residues 209–277 (KRTGSVSLLQ…PRFLTFMGSQ (69 aa)) are peroxisomal matrix. Residues 278-305 (FFPTFIFVLRVYQWWTTQDMTTKLQKRV) traverse the membrane as a helical segment. The Cytoplasmic portion of the chain corresponds to 306 to 399 (NDLDEDIPRP…VVTGIRKLLI (94 aa)). Residues Cys334, Cys337, Cys354, and Cys357 each contribute to the Zn(2+) site. The RING-type; degenerate zinc-finger motif lies at 334-373 (CPVCEKTVQNPCVLETGYVACYPCAISYLVNNEGHCPVTN).

This sequence belongs to the pex2/pex10/pex12 family. As to quaternary structure, component of the PEX2-PEX10-PEX12 retrotranslocation channel, composed of PEX2, PEX10 and PEX12.

It localises to the peroxisome membrane. It functions in the pathway protein modification; protein ubiquitination. Functionally, component of a retrotranslocation channel required for peroxisome organization by mediating export of the PEX5 receptor from peroxisomes to the cytosol, thereby promoting PEX5 recycling. The retrotranslocation channel is composed of PEX2, PEX10 and PEX12; each subunit contributing transmembrane segments that coassemble into an open channel that specifically allows the passage of PEX5 through the peroxisomal membrane. PEX12 also regulates PEX5 recycling by activating the E3 ubiquitin-protein ligase activity of PEX10. When PEX5 recycling is compromised, PEX12 stimulates PEX10-mediated polyubiquitination of PEX5, leading to its subsequent degradation. This is Peroxisome assembly protein 12 from Saccharomyces cerevisiae (strain ATCC 204508 / S288c) (Baker's yeast).